Reading from the N-terminus, the 368-residue chain is 1-aminocyclopropane-1-carboxylate oxidase (368 aa).

Positions 177-307 (PFILMGLLHY…RFSIPFFLDP (131 aa)) constitute a Fe2OG dioxygenase domain. A disordered region spans residues 191–226 (HQEQEEEQEDDESNNGGKKSPNPDESKKPEVEKFGT). The segment covering 194-203 (QEEEQEDDES) has biased composition (acidic residues). Residues 211–223 (PNPDESKKPEVEK) show a composition bias toward basic and acidic residues. Fe cation is bound by residues His-229, Asp-231, and His-287. Arg-298 contacts 2-oxoglutarate.

This sequence belongs to the iron/ascorbate-dependent oxidoreductase family. Fe(2+) serves as cofactor.

The enzyme catalyses 1-aminocyclopropane-1-carboxylate + L-ascorbate + O2 = ethene + L-dehydroascorbate + hydrogen cyanide + CO2 + 2 H2O. Its pathway is alkene biosynthesis; ethylene biosynthesis via S-adenosyl-L-methionine; ethylene from S-adenosyl-L-methionine: step 2/2. Functionally, involved in ethylene biosynthesis. Overexpression induces overproduction of ethylene. This is 1-aminocyclopropane-1-carboxylate oxidase (aco) from Dictyostelium discoideum (Social amoeba).